Here is a 1059-residue protein sequence, read N- to C-terminus: Protein cappuccino (1059 aa).

Composition is skewed to polar residues over residues 62–80 and 90–123; these read AAVT…NESG and ATTS…SAAS. Disordered stretches follow at residues 62–146 and 448–647; these read AAVT…GTPT and QTES…TAPP. Positions 133 to 142 are enriched in pro residues; sequence LPLPPPPPGF. Positions 468–481 are enriched in basic and acidic residues; that stretch reads SDNESAKEDGEKPH. The region spanning 480–560 is the FH1 domain; the sequence is PHAVAPPPPP…PPPPMSASPS (81 aa). Over residues 483–541 the composition is skewed to pro residues; the sequence is VAPPPPPPPPPLHAFVAPPPPPPPPPPPPPPLANYGAPPPPPPPPPGSGSAPPPPPPAP. The FH2 domain occupies 585–1032; it reads RKSAVNPPKP…KKSKQAQIES (448 aa). Positions 620–629 are enriched in polar residues; sequence TDSTENSGSS. The interval 1049-1059 is important for interaction with spir; sequence KERMLMRRSKN.

Belongs to the formin homology family. Cappuccino subfamily. Interacts with wash. Interacts with spir.

The protein resides in the cytoplasm. It is found in the cytoskeleton. Its subcellular location is the cytosol. The protein localises to the membrane. It localises to the cytoplasmic vesicle membrane. In terms of biological role, acts as an actin nucleation factor and promotes assembly of actin filaments together with spir. May play a role in intracellular vesicle transport along actin fibers, providing a novel link between actin cytoskeleton dynamics and intracellular transport. The chain is Protein cappuccino (capu) from Drosophila melanogaster (Fruit fly).